The sequence spans 231 residues: ABC transporter ATP-binding protein YtrE (231 aa).

Residues 4-231 enclose the ABC transporter domain; the sequence is VQHIDHSFTI…VLKGGITVEV (228 aa). Residue 42-49 participates in ATP binding; that stretch reads GRSGSGKS.

It belongs to the ABC transporter superfamily. In terms of assembly, the complex is composed of 2 ATP-binding proteins (YtrB and YtrE), 2 transmembrane proteins (YtrC and YtrD) and a solute-binding protein (YtrF).

It is found in the cell membrane. In terms of biological role, part of the ABC transporter complex YtrBCDEF that plays a role in acetoin utilization during stationary phase and sporulation. This chain is ABC transporter ATP-binding protein YtrE (ytrE), found in Bacillus subtilis (strain 168).